The following is a 116-amino-acid chain: Photosystem II reaction center Psb28 protein (116 aa).

This sequence belongs to the Psb28 family. Part of the photosystem II complex.

The protein localises to the plastid. The protein resides in the chloroplast thylakoid membrane. The protein is Photosystem II reaction center Psb28 protein of Guillardia theta (Cryptophyte).